Here is a 552-residue protein sequence, read N- to C-terminus: uncharacterized protein (552 aa).

This sequence belongs to the transposase 25 family.

This is an uncharacterized protein from Sinorhizobium fredii (strain NBRC 101917 / NGR234).